Reading from the N-terminus, the 166-residue chain is NAD(P)H-quinone oxidoreductase subunit I, chloroplastic (166 aa).

4Fe-4S ferredoxin-type domains follow at residues 55–84 (GRIH…VDWK) and 95–124 (LNYS…MTEE). Residues C64, C67, C70, C74, C104, C107, C110, and C114 each contribute to the [4Fe-4S] cluster site.

The protein belongs to the complex I 23 kDa subunit family. NDH is composed of at least 16 different subunits, 5 of which are encoded in the nucleus. It depends on [4Fe-4S] cluster as a cofactor.

The protein resides in the plastid. It is found in the chloroplast thylakoid membrane. The catalysed reaction is a plastoquinone + NADH + (n+1) H(+)(in) = a plastoquinol + NAD(+) + n H(+)(out). It carries out the reaction a plastoquinone + NADPH + (n+1) H(+)(in) = a plastoquinol + NADP(+) + n H(+)(out). In terms of biological role, NDH shuttles electrons from NAD(P)H:plastoquinone, via FMN and iron-sulfur (Fe-S) centers, to quinones in the photosynthetic chain and possibly in a chloroplast respiratory chain. The immediate electron acceptor for the enzyme in this species is believed to be plastoquinone. Couples the redox reaction to proton translocation, and thus conserves the redox energy in a proton gradient. The protein is NAD(P)H-quinone oxidoreductase subunit I, chloroplastic of Sigesbeckia blakei.